A 400-amino-acid chain; its full sequence is Glycerol-3-phosphate dehydrogenase [NAD(+)] 1 (400 aa).

Residues 50–55 (GSGNWG), Phe-138, Lys-161, and Ala-194 each bind NAD(+). Lys-161 provides a ligand contact to substrate. Lys-254 (proton acceptor) is an active-site residue. The NAD(+) site is built by Arg-319 and Gln-348. 319–320 (RN) lines the substrate pocket.

It belongs to the NAD-dependent glycerol-3-phosphate dehydrogenase family.

The catalysed reaction is sn-glycerol 3-phosphate + NAD(+) = dihydroxyacetone phosphate + NADH + H(+). The protein is Glycerol-3-phosphate dehydrogenase [NAD(+)] 1 (GPD1) of Candida glabrata (strain ATCC 2001 / BCRC 20586 / JCM 3761 / NBRC 0622 / NRRL Y-65 / CBS 138) (Yeast).